Consider the following 309-residue polypeptide: Porphobilinogen deaminase (309 aa).

C244 bears the S-(dipyrrolylmethanemethyl)cysteine mark.

Belongs to the HMBS family. In terms of assembly, monomer. Requires dipyrromethane as cofactor.

The enzyme catalyses 4 porphobilinogen + H2O = hydroxymethylbilane + 4 NH4(+). It participates in porphyrin-containing compound metabolism; protoporphyrin-IX biosynthesis; coproporphyrinogen-III from 5-aminolevulinate: step 2/4. Tetrapolymerization of the monopyrrole PBG into the hydroxymethylbilane pre-uroporphyrinogen in several discrete steps. The polypeptide is Porphobilinogen deaminase (Listeria monocytogenes serovar 1/2a (strain ATCC BAA-679 / EGD-e)).